The primary structure comprises 360 residues: Uroporphyrinogen decarboxylase (360 aa).

Substrate contacts are provided by residues 31–35 (RQAGR), aspartate 81, tyrosine 157, threonine 212, and histidine 333.

This sequence belongs to the uroporphyrinogen decarboxylase family. As to quaternary structure, homodimer.

Its subcellular location is the cytoplasm. It catalyses the reaction uroporphyrinogen III + 4 H(+) = coproporphyrinogen III + 4 CO2. It participates in porphyrin-containing compound metabolism; protoporphyrin-IX biosynthesis; coproporphyrinogen-III from 5-aminolevulinate: step 4/4. Catalyzes the decarboxylation of four acetate groups of uroporphyrinogen-III to yield coproporphyrinogen-III. The polypeptide is Uroporphyrinogen decarboxylase (Janthinobacterium sp. (strain Marseille) (Minibacterium massiliensis)).